Here is a 122-residue protein sequence, read N- to C-terminus: Flagellar hook-basal body complex protein FliE (122 aa).

This sequence belongs to the FliE family.

Its subcellular location is the bacterial flagellum basal body. This Marinobacter nauticus (strain ATCC 700491 / DSM 11845 / VT8) (Marinobacter aquaeolei) protein is Flagellar hook-basal body complex protein FliE.